The following is a 715-amino-acid chain: Macrolide export ATP-binding/permease protein MacB (715 aa).

The ABC transporter domain maps to 4–245 (IELQDIRKTY…VSKAAPAQSK (242 aa)). Position 40-47 (40-47 (GTSGSGKT)) interacts with ATP. The segment at 229–251 (AVGDMPQVSKAAPAQSKPVHSAM) is disordered. The next 4 membrane-spanning stretches (helical) occupy residues 277-297 (AALTTLGIIIGVAAVIAMMEI), 592-612 (LLLAVALISLIVGGVGIMNIM), 639-659 (QFLFEAVLLCFLGGAVGILVG), and 681-701 (ILAAVGVSATVGIVFGYYPAW).

Belongs to the ABC transporter superfamily. Macrolide exporter (TC 3.A.1.122) family. In terms of assembly, homodimer.

The protein resides in the cell inner membrane. In terms of biological role, non-canonical ABC transporter that contains transmembrane domains (TMD), which form a pore in the inner membrane, and an ATP-binding domain (NBD), which is responsible for energy generation. Confers resistance against macrolides. This Syntrophobacter fumaroxidans (strain DSM 10017 / MPOB) protein is Macrolide export ATP-binding/permease protein MacB.